The chain runs to 225 residues: Ribonuclease 3 (225 aa).

Residues isoleucine 5–aspartate 127 form the RNase III domain. Glutamate 40 contacts Mg(2+). The active site involves aspartate 44. Mg(2+)-binding residues include aspartate 113 and glutamate 116. Residue glutamate 116 is part of the active site. The region spanning aspartate 154–asparagine 224 is the DRBM domain.

This sequence belongs to the ribonuclease III family. Homodimer. The cofactor is Mg(2+).

It is found in the cytoplasm. The catalysed reaction is Endonucleolytic cleavage to 5'-phosphomonoester.. Digests double-stranded RNA. Involved in the processing of primary rRNA transcript to yield the immediate precursors to the large and small rRNAs (23S and 16S). Processes some mRNAs, and tRNAs when they are encoded in the rRNA operon. Processes pre-crRNA and tracrRNA of type II CRISPR loci if present in the organism. The protein is Ribonuclease 3 of Vibrio vulnificus (strain CMCP6).